Consider the following 206-residue polypeptide: Holliday junction branch migration complex subunit RuvA (206 aa).

Positions 1 to 64 are domain I; it reads MIGKLKGTLD…EDMLRLYGFQ (64 aa). The domain II stretch occupies residues 65 to 144; it reads SALEREWFRL…AYAGAASGTI (80 aa). Residues 145–154 form a flexible linker region; sequence GLKQELGEGV. The interval 154 to 206 is domain III; that stretch reads VAPAPITDAVSALVNLGYSRDTAANAVAAALKTAGEDADASKLIRFGLKELAR.

It belongs to the RuvA family. As to quaternary structure, homotetramer. Forms an RuvA(8)-RuvB(12)-Holliday junction (HJ) complex. HJ DNA is sandwiched between 2 RuvA tetramers; dsDNA enters through RuvA and exits via RuvB. An RuvB hexamer assembles on each DNA strand where it exits the tetramer. Each RuvB hexamer is contacted by two RuvA subunits (via domain III) on 2 adjacent RuvB subunits; this complex drives branch migration. In the full resolvosome a probable DNA-RuvA(4)-RuvB(12)-RuvC(2) complex forms which resolves the HJ.

The protein localises to the cytoplasm. Its function is as follows. The RuvA-RuvB-RuvC complex processes Holliday junction (HJ) DNA during genetic recombination and DNA repair, while the RuvA-RuvB complex plays an important role in the rescue of blocked DNA replication forks via replication fork reversal (RFR). RuvA specifically binds to HJ cruciform DNA, conferring on it an open structure. The RuvB hexamer acts as an ATP-dependent pump, pulling dsDNA into and through the RuvAB complex. HJ branch migration allows RuvC to scan DNA until it finds its consensus sequence, where it cleaves and resolves the cruciform DNA. The protein is Holliday junction branch migration complex subunit RuvA of Mesorhizobium japonicum (strain LMG 29417 / CECT 9101 / MAFF 303099) (Mesorhizobium loti (strain MAFF 303099)).